The chain runs to 279 residues: GDT1-like protein 3 (279 aa).

Positions 1–23 (MDPNPRLLILLVLLAFSATVAVA) are cleaved as a signal peptide. Transmembrane regions (helical) follow at residues 64-84 (VGPGLFDALFASLSMILVSEI), 103-123 (IVLSGALSALYVMTVLSTGLG), 135-155 (TNSAATVLYLFFGLRLLYIAW), 186-206 (FFGRFCTPIFLEAFILTFLAE), 224-244 (AIGVAVGASLGHTVCTSLAVI), and 258-278 (VATIGGVLFLGFSVSSYFYPP).

The protein belongs to the GDT1 family.

The protein localises to the membrane. This Oryza sativa subsp. japonica (Rice) protein is GDT1-like protein 3.